We begin with the raw amino-acid sequence, 186 residues long: Cell division protein SepF (186 aa).

Residues 24–91 (EDEEEEERYA…HNPPHLRAVP (68 aa)) are disordered.

Belongs to the SepF family. As to quaternary structure, homodimer. Interacts with FtsZ.

The protein localises to the cytoplasm. Cell division protein that is part of the divisome complex and is recruited early to the Z-ring. Probably stimulates Z-ring formation, perhaps through the cross-linking of FtsZ protofilaments. Its function overlaps with FtsA. This Rubrobacter xylanophilus (strain DSM 9941 / JCM 11954 / NBRC 16129 / PRD-1) protein is Cell division protein SepF.